The chain runs to 254 residues: Leucyl/phenylalanyl-tRNA--protein transferase (254 aa).

This sequence belongs to the L/F-transferase family.

It localises to the cytoplasm. It carries out the reaction N-terminal L-lysyl-[protein] + L-leucyl-tRNA(Leu) = N-terminal L-leucyl-L-lysyl-[protein] + tRNA(Leu) + H(+). The catalysed reaction is N-terminal L-arginyl-[protein] + L-leucyl-tRNA(Leu) = N-terminal L-leucyl-L-arginyl-[protein] + tRNA(Leu) + H(+). The enzyme catalyses L-phenylalanyl-tRNA(Phe) + an N-terminal L-alpha-aminoacyl-[protein] = an N-terminal L-phenylalanyl-L-alpha-aminoacyl-[protein] + tRNA(Phe). Functionally, functions in the N-end rule pathway of protein degradation where it conjugates Leu, Phe and, less efficiently, Met from aminoacyl-tRNAs to the N-termini of proteins containing an N-terminal arginine or lysine. This is Leucyl/phenylalanyl-tRNA--protein transferase from Burkholderia cenocepacia (strain HI2424).